The chain runs to 213 residues: Ion-translocating oxidoreductase complex subunit E (213 aa).

Transmembrane regions (helical) follow at residues Thr25–Gly45, Ile46–Ile66, Pro77–Phe97, Asp100–Gly120, Ile135–Ile155, and Ala181–Val201.

Belongs to the NqrDE/RnfAE family. The Rnf complex is probably composed of eight subunits, including RnfA, RnfB, RnfC, RnfD, RnfE and RnfG.

Its subcellular location is the cell membrane. Part of a membrane-bound complex that couples electron transfer with translocation of ions across the membrane. Catalyzes Na(+) transport, most probably coupled to electron transfer from reduced ferredoxin to methanophenazine and heterodisulfide reductase. Involved in heterodisulfide reduction during methanogenesis from acetate. The polypeptide is Ion-translocating oxidoreductase complex subunit E (Methanosarcina acetivorans (strain ATCC 35395 / DSM 2834 / JCM 12185 / C2A)).